The sequence spans 35 residues: Photosystem II reaction center protein T (35 aa).

A helical membrane pass occupies residues 3–23 (ALVYTFLLISTLGIIFFAIFF).

This sequence belongs to the PsbT family. In terms of assembly, PSII is composed of 1 copy each of membrane proteins PsbA, PsbB, PsbC, PsbD, PsbE, PsbF, PsbH, PsbI, PsbJ, PsbK, PsbL, PsbM, PsbT, PsbY, PsbZ, Psb30/Ycf12, at least 3 peripheral proteins of the oxygen-evolving complex and a large number of cofactors. It forms dimeric complexes.

The protein resides in the plastid. It localises to the chloroplast thylakoid membrane. Functionally, found at the monomer-monomer interface of the photosystem II (PS II) dimer, plays a role in assembly and dimerization of PSII. PSII is a light-driven water plastoquinone oxidoreductase, using light energy to abstract electrons from H(2)O, generating a proton gradient subsequently used for ATP formation. This Welwitschia mirabilis (Tree tumbo) protein is Photosystem II reaction center protein T.